The chain runs to 372 residues: Carbamoyl phosphate synthase small chain (372 aa).

The CPSase stretch occupies residues 1 to 186; sequence MTYCKRGTEG…IHQNNSPDII (186 aa). 3 residues coordinate L-glutamine: Ser52, Gly233, and Gly235. In terms of domain architecture, Glutamine amidotransferase type-1 spans 185-372; sequence IIVLVDCGIK…KKMVIKDEGN (188 aa). Cys261 acts as the Nucleophile in catalysis. L-glutamine is bound by residues Leu262, Gln265, Asn303, Gly305, and Tyr306. Residues His345 and Glu347 contribute to the active site.

Belongs to the CarA family. Composed of two chains; the small (or glutamine) chain promotes the hydrolysis of glutamine to ammonia, which is used by the large (or ammonia) chain to synthesize carbamoyl phosphate. Tetramer of heterodimers (alpha,beta)4.

The enzyme catalyses hydrogencarbonate + L-glutamine + 2 ATP + H2O = carbamoyl phosphate + L-glutamate + 2 ADP + phosphate + 2 H(+). It catalyses the reaction L-glutamine + H2O = L-glutamate + NH4(+). It participates in amino-acid biosynthesis; L-arginine biosynthesis; carbamoyl phosphate from bicarbonate: step 1/1. The protein operates within pyrimidine metabolism; UMP biosynthesis via de novo pathway; (S)-dihydroorotate from bicarbonate: step 1/3. Functionally, small subunit of the glutamine-dependent carbamoyl phosphate synthetase (CPSase). CPSase catalyzes the formation of carbamoyl phosphate from the ammonia moiety of glutamine, carbonate, and phosphate donated by ATP, constituting the first step of 2 biosynthetic pathways, one leading to arginine and/or urea and the other to pyrimidine nucleotides. The small subunit (glutamine amidotransferase) binds and cleaves glutamine to supply the large subunit with the substrate ammonia. In Metallosphaera sedula (strain ATCC 51363 / DSM 5348 / JCM 9185 / NBRC 15509 / TH2), this protein is Carbamoyl phosphate synthase small chain.